Consider the following 640-residue polypeptide: Probable inactive receptor kinase At3g08680 (640 aa).

The signal sequence occupies residues 1–22 (MMKIIAAFLFLLVTTFVSRCLS). LRR repeat units lie at residues 93–115 (ALRI…ILSL), 117–138 (FIRS…VLSH), 139–162 (RLVN…QNLT), 163–185 (QLTD…PPRL), and 186–206 (KYLN…VKSF). The tract at residues 222–249 (LTPCPENTTAPSPSPTTPTEGPGTTNIG) is disordered. Residues 226–247 (PENTTAPSPSPTTPTEGPGTTN) are compositionally biased toward low complexity. The helical transmembrane segment at 260–280 (GAIVGIAVGGSVLLFIILAII) threads the bilayer. The tract at residues 289 to 315 (DGGQDSTAVPKAKPGRSDNKAEEFGSG) is disordered. The Protein kinase domain maps to 341 to 614 (RASAEVLGKG…EEVVNMMEEI (274 aa)). Phosphoserine is present on Ser-343. 347-355 (LGKGSYGTT) serves as a coordination point for ATP. A Phosphothreonine modification is found at Thr-364. Lys-369 lines the ATP pocket. Phosphothreonine is present on residues Thr-441, Thr-514, and Thr-564. The disordered stretch occupies residues 612–640 (EEIRPSGSGPGSGNRASSPEMIRSSDSPV).

It belongs to the protein kinase superfamily. Tyr protein kinase family.

It localises to the membrane. The sequence is that of Probable inactive receptor kinase At3g08680 from Arabidopsis thaliana (Mouse-ear cress).